A 291-amino-acid chain; its full sequence is UPF0276 protein VV1_0952 (291 aa).

The protein belongs to the UPF0276 family.

This chain is UPF0276 protein VV1_0952, found in Vibrio vulnificus (strain CMCP6).